We begin with the raw amino-acid sequence, 52 residues long: Rubredoxin (52 aa).

The 52-residue stretch at 1–52 (MKKYVCTVCGYEYDPAEGDPDNGVKPGTSFDDLPADWVCPVCGAPKSEFEAA) folds into the Rubredoxin-like domain. Cys-6, Cys-9, Cys-39, and Cys-42 together coordinate Fe cation.

This sequence belongs to the rubredoxin family. It depends on Fe(3+) as a cofactor.

Its subcellular location is the cytoplasm. Its function is as follows. Rubredoxin is a small nonheme, iron protein lacking acid-labile sulfide. Its single Fe, chelated to 4 Cys, functions as an electron acceptor and may also stabilize the conformation of the molecule. Electron acceptor for cytoplasmic lactate dehydrogenase. This chain is Rubredoxin (rub), found in Nitratidesulfovibrio vulgaris (strain ATCC 29579 / DSM 644 / CCUG 34227 / NCIMB 8303 / VKM B-1760 / Hildenborough) (Desulfovibrio vulgaris).